The following is a 286-amino-acid chain: 4-hydroxy-tetrahydrodipicolinate synthase (286 aa).

Residue Thr-42 coordinates pyruvate. Tyr-129 (proton donor/acceptor) is an active-site residue. Lys-157 serves as the catalytic Schiff-base intermediate with substrate. Val-196 is a pyruvate binding site.

Belongs to the DapA family. Homotetramer; dimer of dimers.

Its subcellular location is the cytoplasm. The enzyme catalyses L-aspartate 4-semialdehyde + pyruvate = (2S,4S)-4-hydroxy-2,3,4,5-tetrahydrodipicolinate + H2O + H(+). The protein operates within amino-acid biosynthesis; L-lysine biosynthesis via DAP pathway; (S)-tetrahydrodipicolinate from L-aspartate: step 3/4. Functionally, catalyzes the condensation of (S)-aspartate-beta-semialdehyde [(S)-ASA] and pyruvate to 4-hydroxy-tetrahydrodipicolinate (HTPA). In Chlamydia muridarum (strain MoPn / Nigg), this protein is 4-hydroxy-tetrahydrodipicolinate synthase.